A 444-amino-acid chain; its full sequence is uncharacterized protein (444 aa).

The transit peptide at Met1 to Arg72 directs the protein to the chloroplast. Residues His77–Lys107 are disordered. Over residues Ser92–Asp101 the composition is skewed to polar residues. Residues Glu175–Ile272 form the CRM domain. The stretch at Asp292–Glu355 forms a coiled coil. Disordered stretches follow at residues Glu344–Ser364 and Lys392–Asp426. Residues Cys346 to Gly357 show a composition bias toward acidic residues. Over residues Asp406–Asp426 the composition is skewed to basic and acidic residues.

It is found in the plastid. The protein localises to the chloroplast. This is an uncharacterized protein from Arabidopsis thaliana (Mouse-ear cress).